The sequence spans 444 residues: Phosphoglucosamine mutase (444 aa).

Ser102 serves as the catalytic Phosphoserine intermediate. Residues Ser102, Asp241, Asp243, and Asp245 each coordinate Mg(2+). Position 102 is a phosphoserine (Ser102).

Belongs to the phosphohexose mutase family. Mg(2+) serves as cofactor. In terms of processing, activated by phosphorylation.

The enzyme catalyses alpha-D-glucosamine 1-phosphate = D-glucosamine 6-phosphate. Functionally, catalyzes the conversion of glucosamine-6-phosphate to glucosamine-1-phosphate. This Paracidovorax citrulli (strain AAC00-1) (Acidovorax citrulli) protein is Phosphoglucosamine mutase.